Here is a 528-residue protein sequence, read N- to C-terminus: Benzoylformate decarboxylase (528 aa).

Residues Gln117 and Leu118 each coordinate Mg(2+). A thiamine pyrophosphate binding region spans residues 377–460 (TSTVTAFWQR…IILKNGTYGA (84 aa)). The Ca(2+) site is built by Asp428, Asn455, and Thr457.

This sequence belongs to the TPP enzyme family. In terms of assembly, homotetramer. Ca(2+) serves as cofactor. Thiamine diphosphate is required as a cofactor. Requires Mg(2+) as cofactor.

The catalysed reaction is phenylglyoxylate + H(+) = benzaldehyde + CO2. The protein operates within aromatic compound metabolism; (R)-mandelate degradation; benzoate from (R)-mandelate: step 3/4. The protein is Benzoylformate decarboxylase (mdlC) of Pseudomonas aeruginosa (strain ATCC 15692 / DSM 22644 / CIP 104116 / JCM 14847 / LMG 12228 / 1C / PRS 101 / PAO1).